We begin with the raw amino-acid sequence, 185 residues long: Elongation factor P (185 aa).

The protein belongs to the elongation factor P family.

It localises to the cytoplasm. Its pathway is protein biosynthesis; polypeptide chain elongation. Its function is as follows. Involved in peptide bond synthesis. Stimulates efficient translation and peptide-bond synthesis on native or reconstituted 70S ribosomes in vitro. Probably functions indirectly by altering the affinity of the ribosome for aminoacyl-tRNA, thus increasing their reactivity as acceptors for peptidyl transferase. This Streptococcus equi subsp. equi (strain 4047) protein is Elongation factor P.